The chain runs to 447 residues: UDP-N-acetylmuramate--L-alanine ligase (447 aa).

108-114 contacts ATP; sequence GSHGKTS.

It belongs to the MurCDEF family.

The protein resides in the cytoplasm. It carries out the reaction UDP-N-acetyl-alpha-D-muramate + L-alanine + ATP = UDP-N-acetyl-alpha-D-muramoyl-L-alanine + ADP + phosphate + H(+). Its pathway is cell wall biogenesis; peptidoglycan biosynthesis. In terms of biological role, cell wall formation. The chain is UDP-N-acetylmuramate--L-alanine ligase from Listeria monocytogenes serotype 4a (strain HCC23).